The primary structure comprises 1181 residues: Pesticidal crystal protein Cry1Ae (1181 aa).

It belongs to the delta endotoxin family.

In terms of biological role, promotes colloidosmotic lysis by binding to the midgut epithelial cells of many lepidopteran larvae. The chain is Pesticidal crystal protein Cry1Ae (cry1Ae) from Bacillus thuringiensis subsp. alesti.